We begin with the raw amino-acid sequence, 347 residues long: MDPRKIQLPREIYTGPGVIEDTGRICRDLRFEGRAMVVTGPRTLQIAGEAAIESLQAEGFEVDQVTVDDATMASVRNVQDGLDGVSVVLGVGGGKVIDVAKMSATLEGLHFISVPTAASHDGIASPRASIRNGEGTASLEASSPIGVIADTEIISRAPFRLLASGCADIISNYTAIMDWKLAHRLLNERYSESAAALSLMTAKMIIKSADAIKEGLEESARLAVKSLISSGIAISIAGSSRPASGSEHKFSHALDMIAPKPALHGEQCGVGTIMMMHLHGGDWQFIRDALARINAPTTAAELGIDPEYIIEALTMAHNIRRERYTILGDRGLTREAAERLAKITEVI.

NAD(+)-binding positions include 94–98 (GKVID) and 116–119 (TAAS). D121 lines the substrate pocket. S125 provides a ligand contact to NAD(+). Substrate is bound at residue D168. D168 and H248 together coordinate Zn(2+). Substrate is bound at residue H252. A Zn(2+)-binding site is contributed by H264.

It belongs to the glycerol-1-phosphate dehydrogenase family. In terms of assembly, homooctamer. The cofactor is Zn(2+).

The protein resides in the cytoplasm. It catalyses the reaction sn-glycerol 1-phosphate + NAD(+) = dihydroxyacetone phosphate + NADH + H(+). The catalysed reaction is sn-glycerol 1-phosphate + NADP(+) = dihydroxyacetone phosphate + NADPH + H(+). The protein operates within membrane lipid metabolism; glycerophospholipid metabolism. Partially inhibited by divalent metal cations such as Co(2+), Cu(2+) and Ni(2+). In terms of biological role, catalyzes the NAD(P)H-dependent reduction of dihydroxyacetonephosphate (DHAP or glycerone phosphate) to glycerol 1-phosphate (G1P). The G1P thus generated is used as the glycerophosphate backbone of phospholipids in the cellular membranes of Archaea. Is also able to catalyze the reverse reaction, i.e. the NAD(P)(+)-dependent oxidation of G1P but not of G3P. Is not active toward glycerol, dihydroxyacetone, glyceraldehyde-3-phosphate, glyceraldehyde and glycerol-2-phosphate. In Methanothermobacter thermautotrophicus (strain ATCC 29096 / DSM 1053 / JCM 10044 / NBRC 100330 / Delta H) (Methanobacterium thermoautotrophicum), this protein is Glycerol-1-phosphate dehydrogenase [NAD(P)+] (egsA).